Here is a 199-residue protein sequence, read N- to C-terminus: Recombination protein RecR (199 aa).

A C4-type zinc finger spans residues 57–72 (CERCNNLSEAPLCAVC). The 95-residue stretch at 80–174 (SILCVVESPA…TISRIARGVP (95 aa)) folds into the Toprim domain.

It belongs to the RecR family.

In terms of biological role, may play a role in DNA repair. It seems to be involved in an RecBC-independent recombinational process of DNA repair. It may act with RecF and RecO. The polypeptide is Recombination protein RecR (Acidithiobacillus ferrooxidans (strain ATCC 23270 / DSM 14882 / CIP 104768 / NCIMB 8455) (Ferrobacillus ferrooxidans (strain ATCC 23270))).